A 718-amino-acid chain; its full sequence is LON peptidase N-terminal domain and RING finger protein 3 (718 aa).

Residues 1 to 69 (MESLRTEQML…PGTSTPESKV (69 aa)) form a disordered region. The segment covering 57–66 (EQSPGTSTPE) has biased composition (polar residues). The TPR 1 repeat unit spans residues 67–100 (SKVLLTQADALASRGRIREALEVYRQLSERQQLV). Residues 158 to 196 (CRKCHGFLSDPVSLSCGHTFCKLCLERGRAADRRCALCG) form an RING-type 1 zinc finger. TPR repeat units lie at residues 243–276 (ASQL…APND) and 278–310 (LLYS…RPMG). A disordered region spans residues 322 to 413 (SQEEAAARGD…TDQGDKPALS (92 aa)). Over residues 339–352 (AKVKGDGQQHHMKD) the composition is skewed to basic and acidic residues. An RING-type 2 zinc finger spans residues 426–464 (CALCMRLFYEPVTTPCGHTFCLKCLERCLDHNAKCPLCK). Residues 505 to 714 (MEELSNLNKN…GIRRVLAFIS (210 aa)) enclose the Lon N-terminal domain.

The chain is LON peptidase N-terminal domain and RING finger protein 3 (LONRF3) from Macaca fascicularis (Crab-eating macaque).